A 229-amino-acid polypeptide reads, in one-letter code: DNA mismatch repair protein MutH (229 aa).

This sequence belongs to the MutH family.

The protein resides in the cytoplasm. In terms of biological role, sequence-specific endonuclease that cleaves unmethylated GATC sequences. It is involved in DNA mismatch repair. This is DNA mismatch repair protein MutH from Escherichia coli O6:K15:H31 (strain 536 / UPEC).